The following is a 507-amino-acid chain: Phytoene dehydrogenase (507 aa).

FAD is bound at residue 12-45 (VVVGAGLAGLAAALHLLGAGRRVTVVEREDVPGG).

Belongs to the carotenoid/retinoid oxidoreductase family. FAD is required as a cofactor.

It participates in carotenoid biosynthesis; lycopene biosynthesis. In terms of biological role, this enzyme converts phytoene into zeta-carotene via the intermediary of phytofluene by the symmetrical introduction of two double bonds at the C-11 and C-11' positions of phytoene. This Streptomyces griseus protein is Phytoene dehydrogenase (crtI).